The primary structure comprises 233 residues: Putative quercetin 2,3-dioxygenase PM1685 (233 aa).

Positions 59, 61, 103, and 105 each coordinate a divalent metal cation.

This sequence belongs to the pirin family. A divalent metal cation is required as a cofactor.

The catalysed reaction is quercetin + O2 = 2-(3,4-dihydroxybenzoyloxy)-4,6-dihydroxybenzoate + CO. The protein operates within flavonoid metabolism; quercetin degradation. Functionally, putative quercetin 2,3-dioxygenase. This Pasteurella multocida (strain Pm70) protein is Putative quercetin 2,3-dioxygenase PM1685.